Consider the following 336-residue polypeptide: Opsin-1, short-wave-sensitive 1 (336 aa).

The Extracellular segment spans residues 1 to 29 (MDAWAVQFGNASKVSPFEGEQYHIAPKWA). N-linked (GlcNAc...) asparagine glycosylation occurs at Asn-10. Residues 30–54 (FYLQAAFMGFVFIVGTPMNGIVLFV) traverse the membrane as a helical segment. Residues 55–66 (TMKYKKLRQPLN) are Cytoplasmic-facing. Residues 67–91 (YILVNISLAGFIFDTFSVSQVFVCA) traverse the membrane as a helical segment. Residues 92–106 (ARGYYFLGYTLCAME) are Extracellular-facing. Residues Cys-103 and Cys-180 are joined by a disulfide bond. A helical membrane pass occupies residues 107-126 (AAMGSIAGLVTGWSLAVLAF). Topologically, residues 127–145 (ERYVVICKPFGSFKFGQGQ) are cytoplasmic. A helical transmembrane segment spans residues 146-169 (AVGAVVFTWIIGTACATPPFFGWS). Residues 170–195 (RYIPEGLGTACGPDWYTKSEEYNSES) are Extracellular-facing. A helical transmembrane segment spans residues 196–223 (YTYFLLITCFMMPMTIIIFSYSQLLGAL). Residues 224–245 (RAVAAQQAESESTQKAEREVSR) are Cytoplasmic-facing. The chain crosses the membrane as a helical span at residues 246–269 (MVVVMVGSFVLCYAPYAVTAMYFA). At 270 to 277 (NSDEPNKD) the chain is on the extracellular side. The chain crosses the membrane as a helical span at residues 278-302 (YRLVAIPAFFSKSSCVYNPLIYAFM). The residue at position 289 (Lys-289) is an N6-(retinylidene)lysine. Over 303 to 336 (NKQFNACIMETVFGKKIDESSEVSSKTETSSVSA) the chain is Cytoplasmic.

This sequence belongs to the G-protein coupled receptor 1 family. Opsin subfamily. Phosphorylated on some or all of the serine and threonine residues present in the C-terminal region. Retinal short single cones, outer and inner segments.

It localises to the membrane. In terms of biological role, visual pigments are the light-absorbing molecules that mediate vision. They consist of an apoprotein, opsin, covalently linked to cis-retinal. The protein is Opsin-1, short-wave-sensitive 1 (opn1sw1) of Danio rerio (Zebrafish).